The chain runs to 282 residues: Bifunctional protein FolD (282 aa).

NADP(+) contacts are provided by residues 166-168 (GAS) and Ile-232.

Belongs to the tetrahydrofolate dehydrogenase/cyclohydrolase family. As to quaternary structure, homodimer.

The catalysed reaction is (6R)-5,10-methylene-5,6,7,8-tetrahydrofolate + NADP(+) = (6R)-5,10-methenyltetrahydrofolate + NADPH. The enzyme catalyses (6R)-5,10-methenyltetrahydrofolate + H2O = (6R)-10-formyltetrahydrofolate + H(+). It participates in one-carbon metabolism; tetrahydrofolate interconversion. In terms of biological role, catalyzes the oxidation of 5,10-methylenetetrahydrofolate to 5,10-methenyltetrahydrofolate and then the hydrolysis of 5,10-methenyltetrahydrofolate to 10-formyltetrahydrofolate. The chain is Bifunctional protein FolD from Haemophilus influenzae (strain PittEE).